Consider the following 26-residue polypeptide: Dermaseptin-J3 (26 aa).

Valine amide is present on V26.

Expressed by the skin glands.

The protein resides in the secreted. Has antimicrobial activity. This Phasmahyla jandaia (Jandaia leaf frog) protein is Dermaseptin-J3.